Reading from the N-terminus, the 51-residue chain is Large ribosomal subunit protein eL39 (51 aa).

The protein belongs to the eukaryotic ribosomal protein eL39 family.

This Pyrococcus horikoshii (strain ATCC 700860 / DSM 12428 / JCM 9974 / NBRC 100139 / OT-3) protein is Large ribosomal subunit protein eL39 (rpl39e).